The primary structure comprises 431 residues: Indole diterpene prenyltransferase nodD1 (431 aa).

85-86 (FI) serves as a coordination point for L-tryptophan. Substrate contacts are provided by R107, K194, R268, K270, Y272, and Y353.

The protein belongs to the tryptophan dimethylallyltransferase family.

It functions in the pathway secondary metabolite biosynthesis. In terms of biological role, indole diterpene prenyltransferase; part of the gene cluster that mediates the biosynthesis of the indole diterpenes nodulisporic acids (NA). Nodulisporic acid A (NAA) and its chemically modified derivatives are of particular significance because of their highly potent insecticidal activity against blood-feeding arthropods and lack of observable adverse effects on mammals, in particular the tremogenicity associated with the paspaline-derived IDTs is not observed. The geranylgeranyl diphosphate (GGPP) synthase ggs1, localized outside of the cluster, is proposed to catalyze the first step in nodulisporic acid biosynthesis via conversion of farnesyl pyrophosphate and isopentyl pyrophosphate into geranylgeranyl pyrophosphate (GGPP). Condensation of indole-3-glycerol phosphate with GGPP by the prenyl transferase nodC then forms 3-geranylgeranylindole (3-GGI). Epoxidation by the FAD-dependent monooxygenase nodM leads to a single-epoxidized-GGI that is substrate of the terpene cyclase nodB for cyclization to yield emindole SB. The terminal methyl carbon, C28, of emindole SB is then oxidized by the cytochrome P450 monooxygenase nodW to produce nodulisporic acid F (NAF), the pentacyclic core of NAA. NAF is converted to nodulisporic acid E (NAE) via prenylation. This step is probably performed by one of the indole diterpene prenyltransferases nodD1 or nodD2. Several oxidation steps performed by the FAD-linked oxidoreductase nodO and one of the cytochrome P450 monooxygenase nodR, nodX or nodZ further convert NAE to nodulisporic acid D (NAD). NAD is substrate of cytochrome P450 monooxygenase nodJ to produce the precursor of nodulisporic acid C (NAC), converted to NAC by one of the indole diterpene prenyltransferases nodD1 or nodD2. The FAD-dependent monooxygenase nodY2 then oxidizes NAC to nodulisporic acid B (NAB). Finally NAB is converted to NAA by one of the cytochrome P450 monooxygenases nodR, nodX or nodZ. The polypeptide is Indole diterpene prenyltransferase nodD1 (Hypoxylon pulicicidum).